The sequence spans 281 residues: Very long chain fatty acid elongase 7 (281 aa).

Ala-2 carries the N-acetylalanine modification. The Lumenal segment spans residues 2 to 27 (AFSDLTSRTVHLYDNWIKDADPRVED). Residues 28–48 (WLLMSSPLPQTILLGFYVYFV) traverse the membrane as a helical segment. The Cytoplasmic portion of the chain corresponds to 49-72 (TSLGPKLMENRKPFELKKAMITYN). The helical transmembrane segment at 73–93 (FFIVLFSVYMCYEFVMSGWGI) threads the bilayer. The Lumenal segment spans residues 94 to 115 (GYSFRCDIVDYSRSPTALRMAR). A disulfide bond links Cys-99 and Cys-231. The helical transmembrane segment at 116 to 136 (TCWLYYFSKFIELLDTIFFVL) threads the bilayer. 3-oxoeicosanoyl-CoA is bound by residues Lys-124, Arg-137, Lys-139, Gln-142, and His-147. At 137–142 (RKKNSQ) the chain is on the cytoplasmic side. A helical membrane pass occupies residues 143 to 162 (VTFLHVFHHTIMPWTWWFGV). The HxxHH motif motif lies at 147–151 (HVFHH). The Nucleophile role is filled by His-150. The Lumenal portion of the chain corresponds to 163-171 (KFAAGGLGT). A helical membrane pass occupies residues 172 to 194 (FHALLNTAVHVVMYSYYGLSALG). Tyr-187, Lys-204, Thr-208, and Gln-211 together coordinate 3-oxoeicosanoyl-CoA. Over 195 to 206 (PAYQKYLWWKKY) the chain is Cytoplasmic. The helical transmembrane segment at 207–227 (LTSLQLVQFVIVAIHISQFFF) threads the bilayer. Over 228-236 (MEDCKYQFP) the chain is Lumenal. Residues 237–257 (VFACIIMSYSFMFLLLFLHFW) traverse the membrane as a helical segment. Topologically, residues 258–281 (YRAYTKGQRLPKTVKNGTCKNKDN) are cytoplasmic. Arg-266 provides a ligand contact to 3-oxoeicosanoyl-CoA. The Di-lysine motif motif lies at 277-281 (KNKDN).

This sequence belongs to the ELO family. ELOVL7 subfamily. As to quaternary structure, homodimer. Interacts with TECR. Expressed in most tissues except heart and skeletal muscle.

The protein resides in the endoplasmic reticulum membrane. The catalysed reaction is a very-long-chain acyl-CoA + malonyl-CoA + H(+) = a very-long-chain 3-oxoacyl-CoA + CO2 + CoA. It catalyses the reaction eicosanoyl-CoA + malonyl-CoA + H(+) = 3-oxodocosanoyl-CoA + CO2 + CoA. The enzyme catalyses (5Z,8Z,11Z,14Z)-eicosatetraenoyl-CoA + malonyl-CoA + H(+) = (7Z,10Z,13Z,16Z)-3-oxodocosatetraenoyl-CoA + CO2 + CoA. It carries out the reaction (6Z,9Z,12Z)-octadecatrienoyl-CoA + malonyl-CoA + H(+) = (8Z,11Z,14Z)-3-oxoeicosatrienoyl-CoA + CO2 + CoA. The catalysed reaction is (9Z,12Z)-octadecadienoyl-CoA + malonyl-CoA + H(+) = (11Z,14Z)-3-oxoicosa-11,14-dienoyl-CoA + CO2 + CoA. It catalyses the reaction (9Z)-octadecenoyl-CoA + malonyl-CoA + H(+) = 3-oxo-(11Z)-eicosenoyl-CoA + CO2 + CoA. The enzyme catalyses octadecanoyl-CoA + malonyl-CoA + H(+) = 3-oxoeicosanoyl-CoA + CO2 + CoA. It carries out the reaction hexadecanoyl-CoA + malonyl-CoA + H(+) = 3-oxooctadecanoyl-CoA + CO2 + CoA. The catalysed reaction is (9Z,12Z,15Z)-octadecatrienoyl-CoA + malonyl-CoA + H(+) = (11Z,14Z,17Z)-3-oxoeicosatrienoyl-CoA + CO2 + CoA. The protein operates within lipid metabolism; fatty acid biosynthesis. Functionally, catalyzes the first and rate-limiting reaction of the four reactions that constitute the long-chain fatty acids elongation cycle. This endoplasmic reticulum-bound enzymatic process allows the addition of 2 carbons to the chain of long- and very long-chain fatty acids (VLCFAs) per cycle. Condensing enzyme with higher activity toward C18 acyl-CoAs, especially C18:3(n-3) acyl-CoAs and C18:3(n-6)-CoAs. Also active toward C20:4-, C18:0-, C18:1-, C18:2- and C16:0-CoAs, and weakly toward C20:0-CoA. Little or no activity toward C22:0-, C24:0-, or C26:0-CoAs. May participate in the production of saturated and polyunsaturated VLCFAs of different chain lengths that are involved in multiple biological processes as precursors of membrane lipids and lipid mediators. The protein is Very long chain fatty acid elongase 7 of Homo sapiens (Human).